Reading from the N-terminus, the 251-residue chain is CDP-diacylglycerol pyrophosphatase (251 aa).

The chain crosses the membrane as a helical span at residues 4–24 (AGLLFLVMIVIAVVAAGIGYW).

It belongs to the Cdh family.

The protein localises to the cell inner membrane. The catalysed reaction is a CDP-1,2-diacyl-sn-glycerol + H2O = a 1,2-diacyl-sn-glycero-3-phosphate + CMP + 2 H(+). It functions in the pathway phospholipid metabolism; CDP-diacylglycerol degradation; phosphatidate from CDP-diacylglycerol: step 1/1. The sequence is that of CDP-diacylglycerol pyrophosphatase from Escherichia coli O9:H4 (strain HS).